The primary structure comprises 386 residues: Succinate--CoA ligase [ADP-forming] subunit beta (386 aa).

Positions 9-244 (KDLLASYDVP…PSQENVRDVL (236 aa)) constitute an ATP-grasp domain. ATP-binding positions include lysine 46, 53–55 (GRG), valine 102, and glutamate 107. 2 residues coordinate Mg(2+): asparagine 199 and aspartate 213. Substrate contacts are provided by residues asparagine 264 and 321-323 (GIM).

This sequence belongs to the succinate/malate CoA ligase beta subunit family. Heterotetramer of two alpha and two beta subunits. Mg(2+) serves as cofactor.

It carries out the reaction succinate + ATP + CoA = succinyl-CoA + ADP + phosphate. The catalysed reaction is GTP + succinate + CoA = succinyl-CoA + GDP + phosphate. It participates in carbohydrate metabolism; tricarboxylic acid cycle; succinate from succinyl-CoA (ligase route): step 1/1. Succinyl-CoA synthetase functions in the citric acid cycle (TCA), coupling the hydrolysis of succinyl-CoA to the synthesis of either ATP or GTP and thus represents the only step of substrate-level phosphorylation in the TCA. The beta subunit provides nucleotide specificity of the enzyme and binds the substrate succinate, while the binding sites for coenzyme A and phosphate are found in the alpha subunit. The chain is Succinate--CoA ligase [ADP-forming] subunit beta from Chlamydia pneumoniae (Chlamydophila pneumoniae).